The following is a 267-amino-acid chain: MPGLFQAEGIVLKSRDYQETDQLLTILTRTHGKLEAIVKGVRKPRSSLRSGTQQLCRSRFLFYAGKSLATVTQCEVQEIYGPLRQDLKRLAYAYYLVEIADGVVMPGQVNQAMYLLLQQGLEALGELEPALVARAFEARTLKLLGLAPRLEACALCQRELKGNGRVAIAPAAGGALCPECRGHQGREYLVSRGGVKTWQQLNRLNWSYLKRLQINPMLMGELGEVMPAFLEYYLDRRLRSRAFINEIGGDNIDGPGKNRPVAQAPGT.

The protein belongs to the RecO family.

In terms of biological role, involved in DNA repair and RecF pathway recombination. This is DNA repair protein RecO from Moorella thermoacetica (strain ATCC 39073 / JCM 9320).